Consider the following 191-residue polypeptide: Peptidyl-tRNA hydrolase (191 aa).

Residue Y17 participates in tRNA binding. H22 (proton acceptor) is an active-site residue. Residues Y68, N70, and N116 each contribute to the tRNA site.

It belongs to the PTH family. In terms of assembly, monomer.

The protein localises to the cytoplasm. It catalyses the reaction an N-acyl-L-alpha-aminoacyl-tRNA + H2O = an N-acyl-L-amino acid + a tRNA + H(+). Hydrolyzes ribosome-free peptidyl-tRNAs (with 1 or more amino acids incorporated), which drop off the ribosome during protein synthesis, or as a result of ribosome stalling. Functionally, catalyzes the release of premature peptidyl moieties from peptidyl-tRNA molecules trapped in stalled 50S ribosomal subunits, and thus maintains levels of free tRNAs and 50S ribosomes. In Francisella tularensis subsp. mediasiatica (strain FSC147), this protein is Peptidyl-tRNA hydrolase.